We begin with the raw amino-acid sequence, 218 residues long: MKFFIDTADVNEIREANKLHFLDGVTTNPTLIAKVKKPFWDVVKSILAEVPDKPVSLEVASTDAEGMIKEGEKLAELGKNVVIKIPMTPEGLKAVSYFENKGIKTNVTLVFSPAQALLAMKVGASYISPFVGRLDDISHTGMDLIRQIKQIKDNYNFKSEIIVASVRNPVHVIESAMIGADIATIPYSVIAQLAKHPLTDIGLERFLKDWESVPEKPF.

Residue Lys84 is the Schiff-base intermediate with substrate of the active site.

It belongs to the transaldolase family. Type 3B subfamily.

The protein localises to the cytoplasm. The enzyme catalyses D-sedoheptulose 7-phosphate + D-glyceraldehyde 3-phosphate = D-erythrose 4-phosphate + beta-D-fructose 6-phosphate. The protein operates within carbohydrate degradation; pentose phosphate pathway; D-glyceraldehyde 3-phosphate and beta-D-fructose 6-phosphate from D-ribose 5-phosphate and D-xylulose 5-phosphate (non-oxidative stage): step 2/3. Its function is as follows. Transaldolase is important for the balance of metabolites in the pentose-phosphate pathway. This is Probable transaldolase from Sulfurihydrogenibium sp. (strain YO3AOP1).